Here is a 118-residue protein sequence, read N- to C-terminus: Large ribosomal subunit protein uL18 (118 aa).

The tract at residues 1-24 (MISKPDKNKTRQRRHARVRGKISG) is disordered. Over residues 10–20 (TRQRRHARVRG) the composition is skewed to basic residues.

This sequence belongs to the universal ribosomal protein uL18 family. Part of the 50S ribosomal subunit; part of the 5S rRNA/L5/L18/L25 subcomplex. Contacts the 5S and 23S rRNAs.

Functionally, this is one of the proteins that bind and probably mediate the attachment of the 5S RNA into the large ribosomal subunit, where it forms part of the central protuberance. This Lactiplantibacillus plantarum (strain ATCC BAA-793 / NCIMB 8826 / WCFS1) (Lactobacillus plantarum) protein is Large ribosomal subunit protein uL18.